The following is a 335-amino-acid chain: MMSNIHTNISEWMKMSEETPVIISSRIRLARNLENHVHPLMFPSEQEGYRVINEVQDALSNLTLNRLDTMDQQSKMKLVAKHLVSPELVKQPASAVMLNDDESVSVMINEEDHIRIQALGTDLSLKDLYQRASKIDDELDKALDISYDEHLGYLTTCPTNIGTGMRASVMLHLPGLSIMKRMNRIAQTINRFGFTIRGIYGEGSQVYGHIYQVSNQLTLGKTEEDIIDNLTEVVNQIINEEKQIRERLDKHNSVETLDRVYRSLGVLQNSRIISMEEASYRLSEVKLGIDLNYILLENFKFNELMVAIQSPFLIDDDDNRTVNEKRADLLREHIK.

Positions Val-21 to Ile-244 constitute a Phosphagen kinase C-terminal domain. ATP is bound by residues Ser-24–Arg-28, His-82, Arg-115, Arg-166–Met-170, and Arg-197–Glu-202.

It belongs to the ATP:guanido phosphotransferase family.

It carries out the reaction L-arginyl-[protein] + ATP = N(omega)-phospho-L-arginyl-[protein] + ADP + H(+). Its function is as follows. Catalyzes the specific phosphorylation of arginine residues in proteins. The sequence is that of Protein-arginine kinase from Staphylococcus epidermidis (strain ATCC 12228 / FDA PCI 1200).